We begin with the raw amino-acid sequence, 378 residues long: Aminotransferase apf4 (378 aa).

Arg88 serves as a coordination point for pyridoxal 5'-phosphate. Residue Lys189 is modified to N6-(pyridoxal phosphate)lysine. A pyridoxal 5'-phosphate-binding site is contributed by Glu228. Residues 359-378 (ERGHNGQPTADPTRVIEMPE) are disordered.

The protein belongs to the class-IV pyridoxal-phosphate-dependent aminotransferase family. It depends on pyridoxal 5'-phosphate as a cofactor.

The protein operates within secondary metabolite biosynthesis. Aminotransferase; part of the gene cluster that mediates the biosynthesis of the cyclic tetrapeptide apicidin F (APF). The non-ribosomal peptide synthetase apf1 incorporates four different amino acids to produce apicidin F: L-phenylalanine, D-pipecolic acid (D-pip), N-methoxy-L-tryptophan and L-2-aminooctanedioic acid. L-Phenylalanine is the only proteinogenic amino acid directly used by apf1. The 3 other apf1 substrates are non-proteinogenic and have to be modified by other enzymes of the cluster. Lysine is converted to delta-1-pyrroline-5-carboxylate (P5C) which is reduced to L-pipecolic acid (L-pip) by apf3. L-pip is epimerized to D-pip, probably by apf1 activity, prior to incorporation. L-Tryptophan is N-oxidyzed by one of the cytochrome P450 monooxygenases (apf7 or apf8), and further methylated at the hydroxy group by the O-methyltransferase apf6 to yield N-methoxy-L-tryptophan. The synthesis of the fourth apf1 substrate is more complex. The fatty acid synthase apf5 is involved in the synthesis of the octanoic acid backbone of L-2-aminooctanedioic acid by fixing one acetyl-CoA unit and three malonyl-CoA units. Then one of the cytochrome P450 monooxygenases (apf7 or apf8) may oxidize this backbone to 2-oxooctanoic acid. The aminotransferase apf4 is predicted to catalyze the exchange of the keto group with an amino group. The next step would be the oxidation of 2-aminooctanoic acid by one of the cytochrome P450 monooxygenases (apf7 or apf8). The last step is the oxidation of 2-amino-8-hydroxyoctanoic acid to 2-aminooctanedioic acid is catalyzed by the FAD-dependent monooxygenase apf9. This chain is Aminotransferase apf4, found in Gibberella fujikuroi (strain CBS 195.34 / IMI 58289 / NRRL A-6831) (Bakanae and foot rot disease fungus).